Here is a 430-residue protein sequence, read N- to C-terminus: Chaperone SurA (430 aa).

Positions 1 to 25 (MQIIKTTIATFTAIAFTGAASFTSA) are cleaved as a signal peptide. PpiC domains are found at residues 176-277 (SPDY…KLYE) and 286-385 (VNQT…KVEE).

It is found in the periplasm. It catalyses the reaction [protein]-peptidylproline (omega=180) = [protein]-peptidylproline (omega=0). Functionally, chaperone involved in the correct folding and assembly of outer membrane proteins. Recognizes specific patterns of aromatic residues and the orientation of their side chains, which are found more frequently in integral outer membrane proteins. May act in both early periplasmic and late outer membrane-associated steps of protein maturation. The polypeptide is Chaperone SurA (Saccharophagus degradans (strain 2-40 / ATCC 43961 / DSM 17024)).